The following is a 992-amino-acid chain: Tubulin glycylase 3A (992 aa).

Disordered stretches follow at residues 1–54 (MQTR…NRVV) and 68–113 (QSDS…LGAP). Over residues 7-26 (SEPHRSRDQVTDGDRNRDQP) the composition is skewed to basic and acidic residues. Residues 39 to 49 (VTPPAAPPPTP) show a composition bias toward pro residues. Residues 295–645 (FKLTACVAFL…RRTDPKAELG (351 aa)) form the TTL domain. Residues 457–460 (QKYI), lysine 470, and aspartate 472 contribute to the ATP site. Disordered stretches follow at residues 746–766 (SLCSQLPQKSPSAAPALTATP) and 791–828 (KRNTGGSLSGEQVQSTALPPKRQRSCGPRLSSTNPVES). Residues 794-807 (TGGSLSGEQVQSTA) are compositionally biased toward polar residues.

It is found in the cytoplasm. It localises to the cytoskeleton. Its function is as follows. Polylycylase which modifies alpha- and beta-tubulin, generating side chains of glycine on the gamma-carboxyl groups of specific glutamate residues within the C-terminal tail of alpha- and beta-tubulin. Involved both in the side-chain initiation and elongation steps of the polyglycylation reaction by adding a single glycine chain to generate monoglycine side chains and by elongating monoglycine side chains to polyglycine side chains. This chain is Tubulin glycylase 3A (TTLL3A), found in Drosophila melanogaster (Fruit fly).